We begin with the raw amino-acid sequence, 382 residues long: RNA binding protein fox-1 homolog 1 (382 aa).

The tract at residues 1 to 121 (MNCEREQLRG…NKSQPKRLHV (121 aa)) is disordered. A compositionally biased stretch (polar residues) spans 70-87 (QTHSEQSPADTSAQTVSG). Positions 88–99 (TATQTDDAAPTD) are enriched in low complexity. Residues 100–113 (GQPQTQPSENTENK) show a composition bias toward polar residues. The region spanning 117 to 193 (KRLHVSNIPF…RKIEVNNATA (77 aa)) is the RRM domain. Arginine 317 bears the Asymmetric dimethylarginine mark. A disordered region spans residues 357 to 382 (MPQGSSPSTDFRGAKLHTSRPLLSGS).

In terms of assembly, binds to the C-terminus of ATXN2.

Its subcellular location is the nucleus. The protein localises to the cytoplasm. In terms of biological role, RNA-binding protein that regulates alternative splicing events by binding to 5'-UGCAUGU-3' elements. Prevents binding of U2AF2 to the 3'-splice site. Regulates alternative splicing of tissue-specific exons and of differentially spliced exons during erythropoiesis. This Pongo abelii (Sumatran orangutan) protein is RNA binding protein fox-1 homolog 1 (RBFOX1).